A 732-amino-acid chain; its full sequence is Iron-sulfur clusters transporter ATM1, mitochondrial (732 aa).

The transit peptide at 1–55 (MGFGSCSRHALFTPAAFSGSFTTMTTSCFKRVYTAQIHGGDALGKRLPSVSSFSG) directs the protein to the mitochondrion. Over 56–143 (QLPRHGLHRQ…KNNPNVKFRV (88 aa)) the chain is Mitochondrial matrix. The tract at residues 71-114 (STSHRRQTSPPPSPRTTSQSPTVPSKASTTPPTSLNTSKPIATE) is disordered. The span at 85–95 (RTTSQSPTVPS) shows a compositional bias: low complexity. Residues 96 to 114 (KASTTPPTSLNTSKPIATE) show a composition bias toward polar residues. A helical membrane pass occupies residues 144 to 164 (IGALTLLVAGKVLNVQVPFFF). Residues 144–432 (IGALTLLVAG…LGTVYRELRQ (289 aa)) form the ABC transmembrane type-1 domain. Topologically, residues 165-181 (KTIVDSLNVPITESTTV) are mitochondrial intermembrane. A helical transmembrane segment spans residues 182–202 (WVLAGASIAGYGAARILTTLF). Over 203–262 (GELRNAVFASVAQNAIRKVARETFEHLLNMDMKFHLERQTGGLTRAIDRGTKGISFILSS) the chain is Mitochondrial matrix. The chain crosses the membrane as a helical span at residues 263 to 283 (IVFHVIPTALEISMVCGILSW). Residue Lys284 is a topological domain, mitochondrial intermembrane. A helical membrane pass occupies residues 285-305 (FGWDFAAVTAITMLLYTWFTI). At 306–378 (KTTAWRTTFR…SLAALNSGQN (73 aa)) the chain is on the mitochondrial matrix side. Glutathione-binding positions include 311-315 (RTTFR) and 374-377 (NSGQ). A helical membrane pass occupies residues 379–399 (FIFSSALTMMMLLGAQGIVKG). Residues 400 to 405 (TMTVGD) lie on the Mitochondrial intermembrane side of the membrane. A helical membrane pass occupies residues 406 to 426 (LVLVNQLVFQLSLPLNFLGTV). Residue Gly424 participates in glutathione binding. At 427 to 732 (YRELRQSLID…LEVVDEKKKQ (306 aa)) the chain is on the mitochondrial matrix side. Residues 466–702 (IEFRNVAFAY…PGGVYHRLWQ (237 aa)) enclose the ABC transporter domain. ATP contacts are provided by residues Tyr475 and 499-506 (GPSGCGKS). A disordered region spans residues 708–732 (STQPTDEEIERQREELEVVDEKKKQ). The span at 717-732 (ERQREELEVVDEKKKQ) shows a compositional bias: basic and acidic residues.

The protein belongs to the ABC transporter superfamily. ABCB family. Heavy Metal importer (TC 3.A.1.210) subfamily. In terms of assembly, homodimer.

It is found in the mitochondrion inner membrane. Performs an essential function in the generation of cytoplasmic iron-sulfur proteins by mediating the ATP-dependent export of mitochondrial Fe/S cluster precursors synthesized by NFS1 and other mitochondrial proteins. Hydrolyzes ATP. Binds glutathione and may function by transporting a glutathione-conjugated iron-sulfur compound. Plays a role during copper stress, in a manner dependent on the copper metalloregulatory transcription factor CUF1. The polypeptide is Iron-sulfur clusters transporter ATM1, mitochondrial (Cryptococcus neoformans var. grubii serotype A (strain H99 / ATCC 208821 / CBS 10515 / FGSC 9487) (Filobasidiella neoformans var. grubii)).